A 491-amino-acid chain; its full sequence is Probable CtpA-like serine protease (491 aa).

The interval 1–22 (MNDHQKNHATSQDDNTKSTPSK) is disordered. A compositionally biased stretch (polar residues) spans 8-22 (HATSQDDNTKSTPSK). Residues 31 to 51 (LWHFILVILGIILLTSIITVV) traverse the membrane as a helical segment. Residues 119–201 (TKQFNEGVSG…TYVTLTIKRG (83 aa)) form the PDZ domain. Residues Ser-324, Asp-335, and Lys-349 each act as charge relay system in the active site.

It belongs to the peptidase S41A family.

The protein resides in the cell membrane. The polypeptide is Probable CtpA-like serine protease (Staphylococcus epidermidis (strain ATCC 35984 / DSM 28319 / BCRC 17069 / CCUG 31568 / BM 3577 / RP62A)).